The primary structure comprises 310 residues: Nodulation protein D 2 (310 aa).

The 58-residue stretch at 6-63 (LDLNLLVALDALMTERKLTAAARRVKLSQPAMSAAIARLRTYFGDELFSMQGRELIPT) folds into the HTH lysR-type domain. The H-T-H motif DNA-binding region spans 23–42 (LTAAARRVKLSQPAMSAAIA).

Belongs to the LysR transcriptional regulatory family.

In terms of biological role, nodD regulates the expression of the nodABCFE genes which encode other nodulation proteins. NodD is also a negative regulator of its own expression. Binds flavonoids as inducers. The polypeptide is Nodulation protein D 2 (nodD2) (Rhizobium meliloti (strain 1021) (Ensifer meliloti)).